We begin with the raw amino-acid sequence, 331 residues long: Lipoyl synthase (331 aa).

The [4Fe-4S] cluster site is built by Cys-60, Cys-65, Cys-71, Cys-86, Cys-90, Cys-93, and Ser-301. The Radical SAM core domain maps to 72–290 (WSRGTATFML…REEGMQLGFL (219 aa)).

The protein belongs to the radical SAM superfamily. Lipoyl synthase family. Requires [4Fe-4S] cluster as cofactor.

The protein resides in the cytoplasm. The enzyme catalyses [[Fe-S] cluster scaffold protein carrying a second [4Fe-4S](2+) cluster] + N(6)-octanoyl-L-lysyl-[protein] + 2 oxidized [2Fe-2S]-[ferredoxin] + 2 S-adenosyl-L-methionine + 4 H(+) = [[Fe-S] cluster scaffold protein] + N(6)-[(R)-dihydrolipoyl]-L-lysyl-[protein] + 4 Fe(3+) + 2 hydrogen sulfide + 2 5'-deoxyadenosine + 2 L-methionine + 2 reduced [2Fe-2S]-[ferredoxin]. It participates in protein modification; protein lipoylation via endogenous pathway; protein N(6)-(lipoyl)lysine from octanoyl-[acyl-carrier-protein]: step 2/2. In terms of biological role, catalyzes the radical-mediated insertion of two sulfur atoms into the C-6 and C-8 positions of the octanoyl moiety bound to the lipoyl domains of lipoate-dependent enzymes, thereby converting the octanoylated domains into lipoylated derivatives. The polypeptide is Lipoyl synthase (Deinococcus radiodurans (strain ATCC 13939 / DSM 20539 / JCM 16871 / CCUG 27074 / LMG 4051 / NBRC 15346 / NCIMB 9279 / VKM B-1422 / R1)).